The chain runs to 723 residues: tRNA (guanine(27)-N(2))-dimethyltransferase (723 aa).

Over residues 1-10 the composition is skewed to acidic residues; it reads MENMAEEELL. The interval 1 to 72 is disordered; the sequence is MENMAEEELL…SLASVPEEAE (72 aa). Phosphothreonine is present on Thr-23. The segment covering 32 to 44 has biased composition (low complexity); sequence PAADTALDSAPTP. Residues 45 to 59 are compositionally biased toward pro residues; it reads DSAPAPALAPAPAPA. Ser-61 carries the post-translational modification Phosphoserine. The short motif at 128 to 132 is the Nucleolar localization signal element; sequence HKLRR. A C2H2-type zinc finger spans residues 177-199; sequence YHCIICSATITRRTDMLGHVKRH. Positions 220–679 constitute a Trm1 methyltransferase domain; sequence EVLKETDTDI…ASLTQFKSIL (460 aa). Arg-253, Asp-300, Asp-348, and Ala-349 together coordinate S-adenosyl-L-methionine. Zn(2+) is bound by residues Cys-479, Cys-482, Cys-504, and Cys-506. Residue Lys-576 forms a Glycyl lysine isopeptide (Lys-Gly) (interchain with G-Cter in SUMO2) linkage. A Phosphoserine modification is found at Ser-603.

This sequence belongs to the class I-like SAM-binding methyltransferase superfamily. Trm1 family.

The protein resides in the nucleus. It is found in the nucleolus. It carries out the reaction guanosine(27) in tRNA(Tyr) + 2 S-adenosyl-L-methionine = N(2)-dimethylguanosine(27) in tRNA(Tyr) + 2 S-adenosyl-L-homocysteine + 2 H(+). Its function is as follows. Specifically dimethylates a single guanine residue at position 27 of tRNA(Tyr) using S-adenosyl-L-methionine as donor of the methyl groups. Dimethylation at position 27 of tRNA(Tyr) is required for efficient translation of tyrosine codons. Also required to maintain 3-(3-amino-3-carboxypropyl)uridine (acp3U) in the D-loop of several cytoplasmic tRNAs. This chain is tRNA (guanine(27)-N(2))-dimethyltransferase, found in Rattus norvegicus (Rat).